The chain runs to 238 residues: MIAFIVLLSLAAVLQQSSGTVDFASESSNKKDYQKEIVDKHNALRRSVKPTARNMLRMKWNSRAAQNAKRWADRCTFAHSPPHTRTVGKLRCGENIFMSSQPFAWSGVVQAWYDEVKKFVYGIGAKPPGSVIGHYTQVVWYKSHLLGCASAKCSSTKYLYVCQYCPAGNIRGSIATPYKSGPPCADCPSACVNGLCTNPCKHEDDFSNCKALAKNSKCQTAWIKSKCPATCFCHNKII.

An N-terminal signal peptide occupies residues 1-19 (MIAFIVLLSLAAVLQQSSG). A propeptide spanning residues 20–28 (TVDFASESS) is cleaved from the precursor. One can recognise an SCP domain in the interval 38–164 (VDKHNALRRS…STKYLYVCQY (127 aa)). 8 cysteine pairs are disulfide-bonded: Cys75-Cys153, Cys92-Cys165, Cys148-Cys162, Cys184-Cys191, Cys187-Cys196, Cys200-Cys233, Cys209-Cys227, and Cys218-Cys231. Residues 200–233 (CKHEDDFSNCKALAKNSKCQTAWIKSKCPATCFC) enclose the ShKT domain.

It belongs to the CRISP family. In terms of tissue distribution, expressed by the venom gland.

The protein localises to the secreted. In terms of biological role, blocks olfactory (CNGA2) and retinal (CNGA1) CNG channel currents. Does not affect neither depolarization- nor caffeine-induced contraction of smooth muscle. The chain is Cysteine-rich venom protein pseudechetoxin-like from Hoplocephalus stephensii (Stephens's banded snake).